Consider the following 332-residue polypeptide: Anthranilate phosphoribosyltransferase (332 aa).

Residues Gly78, 81-82 (GD), Ser86, 88-91 (NIST), 106-114 (KHGNKSITS), and Ser118 contribute to the 5-phospho-alpha-D-ribose 1-diphosphate site. Gly78 contributes to the anthranilate binding site. Position 90 (Ser90) interacts with Mg(2+). Anthranilate is bound at residue Asn109. Arg163 is a binding site for anthranilate. Mg(2+) is bound by residues Asp222 and Glu223.

Belongs to the anthranilate phosphoribosyltransferase family. As to quaternary structure, homodimer. Mg(2+) is required as a cofactor.

It catalyses the reaction N-(5-phospho-beta-D-ribosyl)anthranilate + diphosphate = 5-phospho-alpha-D-ribose 1-diphosphate + anthranilate. It participates in amino-acid biosynthesis; L-tryptophan biosynthesis; L-tryptophan from chorismate: step 2/5. In terms of biological role, catalyzes the transfer of the phosphoribosyl group of 5-phosphorylribose-1-pyrophosphate (PRPP) to anthranilate to yield N-(5'-phosphoribosyl)-anthranilate (PRA). The protein is Anthranilate phosphoribosyltransferase of Staphylococcus aureus (strain Mu3 / ATCC 700698).